We begin with the raw amino-acid sequence, 226 residues long: ATP synthase subunit a (226 aa).

The next 5 helical transmembrane spans lie at 20 to 40 (LNWFSTFIGLLIIPSTFWLMP), 74 to 94 (FVSLFSLIMFNNFLGLFPYIF), 100 to 120 (LTLTLTLAFPLWLSFMLYGWI), 162 to 182 (LTANMIAGHLLMTLLGNTGPM), and 187 to 207 (IILSMILITQIALLVLESAVA).

It belongs to the ATPase A chain family. In terms of assembly, F-type ATPases have 2 components, CF(1) - the catalytic core - and CF(0) - the membrane proton channel. CF(1) has five subunits: alpha(3), beta(3), gamma(1), delta(1), epsilon(1). CF(0) has three main subunits: a, b and c.

Its subcellular location is the mitochondrion inner membrane. Functionally, mitochondrial membrane ATP synthase (F(1)F(0) ATP synthase or Complex V) produces ATP from ADP in the presence of a proton gradient across the membrane which is generated by electron transport complexes of the respiratory chain. F-type ATPases consist of two structural domains, F(1) - containing the extramembraneous catalytic core and F(0) - containing the membrane proton channel, linked together by a central stalk and a peripheral stalk. During catalysis, ATP synthesis in the catalytic domain of F(1) is coupled via a rotary mechanism of the central stalk subunits to proton translocation. Key component of the proton channel; it may play a direct role in the translocation of protons across the membrane. In Aedes albopictus (Asian tiger mosquito), this protein is ATP synthase subunit a (mt:ATPase6).